A 156-amino-acid chain; its full sequence is Small ribosomal subunit protein uS7 (156 aa).

It belongs to the universal ribosomal protein uS7 family. Part of the 30S ribosomal subunit. Contacts proteins S9 and S11.

Its function is as follows. One of the primary rRNA binding proteins, it binds directly to 16S rRNA where it nucleates assembly of the head domain of the 30S subunit. Is located at the subunit interface close to the decoding center, probably blocks exit of the E-site tRNA. The polypeptide is Small ribosomal subunit protein uS7 (Rhizobium johnstonii (strain DSM 114642 / LMG 32736 / 3841) (Rhizobium leguminosarum bv. viciae)).